The primary structure comprises 142 residues: ATP synthase epsilon chain (142 aa).

It belongs to the ATPase epsilon chain family. F-type ATPases have 2 components, CF(1) - the catalytic core - and CF(0) - the membrane proton channel. CF(1) has five subunits: alpha(3), beta(3), gamma(1), delta(1), epsilon(1). CF(0) has three main subunits: a, b and c.

The protein resides in the cell inner membrane. In terms of biological role, produces ATP from ADP in the presence of a proton gradient across the membrane. The protein is ATP synthase epsilon chain of Shewanella woodyi (strain ATCC 51908 / MS32).